The sequence spans 240 residues: Probable Ni/Fe-hydrogenase B-type cytochrome subunit (240 aa).

The next 4 helical transmembrane spans lie at 31–51 (LWHWVTALSIVVLGVTGYFIG), 75–95 (FAAGYVLAIGFLGRVYWAFVG), 142–163 (LAMFCFFVIGAVFMSVTGFALY), and 196–213 (LGMWYLVVFVMIHVYLAA).

The protein belongs to the HupC/HyaC/HydC family.

Its subcellular location is the cell membrane. Functionally, probable b-type cytochrome. The polypeptide is Probable Ni/Fe-hydrogenase B-type cytochrome subunit (hupZ) (Azotobacter chroococcum mcd 1).